We begin with the raw amino-acid sequence, 402 residues long: Propionate kinase (402 aa).

Residues N11 and K18 each coordinate ATP. N11 lines the Mg(2+) pocket. A substrate-binding site is contributed by R86. D143 functions as the Proton donor/acceptor in the catalytic mechanism. ATP-binding positions include H175, 203-207 (HLGNG), 278-280 (DLR), and 326-330 (GIGEN).

Belongs to the acetokinase family. TdcD subfamily. In terms of assembly, homodimer. Requires Mg(2+) as cofactor.

The enzyme catalyses propanoate + ATP = propanoyl phosphate + ADP. The protein operates within amino-acid degradation; L-threonine degradation via propanoate pathway; propanoate from L-threonine: step 4/4. In terms of biological role, catalyzes the conversion of propionyl phosphate and ADP to propionate and ATP. The protein is Propionate kinase of Salmonella agona (strain SL483).